Reading from the N-terminus, the 1392-residue chain is DNA-directed RNA polymerase subunit beta (1392 aa).

Belongs to the RNA polymerase beta chain family. As to quaternary structure, the RNAP catalytic core consists of 2 alpha, 1 beta, 1 beta' and 1 omega subunit. When a sigma factor is associated with the core the holoenzyme is formed, which can initiate transcription.

The enzyme catalyses RNA(n) + a ribonucleoside 5'-triphosphate = RNA(n+1) + diphosphate. In terms of biological role, DNA-dependent RNA polymerase catalyzes the transcription of DNA into RNA using the four ribonucleoside triphosphates as substrates. This is DNA-directed RNA polymerase subunit beta from Neisseria gonorrhoeae (strain NCCP11945).